The sequence spans 378 residues: Putative UDP-N-acetylglucosamine 2-epimerase (378 aa).

This sequence belongs to the UDP-N-acetylglucosamine 2-epimerase family.

It is found in the cytoplasm. The enzyme catalyses UDP-N-acetyl-alpha-D-glucosamine = UDP-N-acetyl-alpha-D-mannosamine. The sequence is that of Putative UDP-N-acetylglucosamine 2-epimerase from Thermotoga maritima (strain ATCC 43589 / DSM 3109 / JCM 10099 / NBRC 100826 / MSB8).